The sequence spans 37 residues: Photosystem I reaction center subunit VIII (37 aa).

Residues 9 to 29 traverse the membrane as a helical segment; the sequence is SILVTLVGLVFPAFAMASLFL.

Belongs to the PsaI family.

Its subcellular location is the plastid. It is found in the chloroplast thylakoid membrane. Its function is as follows. May help in the organization of the PsaL subunit. The chain is Photosystem I reaction center subunit VIII from Pelargonium hortorum (Common geranium).